A 327-amino-acid chain; its full sequence is Probable cell division protein WhiA (327 aa).

Residues 275–308 (SLEELGQLADPPMTKDAVAGRIRRLLSMADRKAK) constitute a DNA-binding region (H-T-H motif). The interval 306 to 327 (KAKETGIPDTESAVTADLLDDA) is disordered.

Belongs to the WhiA family.

Involved in cell division and chromosome segregation. The sequence is that of Probable cell division protein WhiA from Rhodococcus jostii (strain RHA1).